We begin with the raw amino-acid sequence, 24 residues long: Brevinin-1Bb (24 aa).

A disulfide bond links C18 and C24.

As to expression, expressed by the skin glands.

It is found in the secreted. Antibacterial activity against Gram-positive bacterium S.aureus and Gram-negative bacterium E.coli. Has activity against C.albicans. The chain is Brevinin-1Bb from Lithobates berlandieri (Rio Grande leopard frog).